The sequence spans 33 residues: Dermaseptin-4 (33 aa).

L33 is modified (leucine amide).

Expressed by the skin glands.

The protein localises to the secreted. In terms of biological role, has antiparasitic activity against trypomastigote form of T.cruzi (IC(50)=0.25 uM) in vitro but not against L.infantum. Probably acts by permeabilizing cell membranes. In vitro, shows no cytotoxicity against macrophages. Has antibacterial activity. The polypeptide is Dermaseptin-4 (Pithecopus nordestinus (Northeastern Brazilian leaf frog)).